A 304-amino-acid chain; its full sequence is Elongation factor Ts (304 aa).

Residues 82–85 (TDFV) are involved in Mg(2+) ion dislocation from EF-Tu.

Belongs to the EF-Ts family.

It is found in the cytoplasm. In terms of biological role, associates with the EF-Tu.GDP complex and induces the exchange of GDP to GTP. It remains bound to the aminoacyl-tRNA.EF-Tu.GTP complex up to the GTP hydrolysis stage on the ribosome. The sequence is that of Elongation factor Ts from Symbiobacterium thermophilum (strain DSM 24528 / JCM 14929 / IAM 14863 / T).